Here is a 217-residue protein sequence, read N- to C-terminus: MAEVTAAQVKELRERTGAGMMDCKKALNEVGGNMDKAIDFLREKGLAAAAKKEGRIAAEGIVEAYIHGGGRIGVMLELNCETDFVANTDGFKQFARDIALQIAAAKPRYLAKADVPEEELEHEKNILRAQALNEGKPEKIVDKMVEGRISKFYKEVCLLEQEFVKDPDKTINDLVLEKTAKIGERIVIRRFTRYEMGEGIEKREEDFAAEVMKEMNR.

The segment at 82–85 (TDFV) is involved in Mg(2+) ion dislocation from EF-Tu.

This sequence belongs to the EF-Ts family.

The protein resides in the cytoplasm. Associates with the EF-Tu.GDP complex and induces the exchange of GDP to GTP. It remains bound to the aminoacyl-tRNA.EF-Tu.GTP complex up to the GTP hydrolysis stage on the ribosome. This Desulfitobacterium hafniense (strain DSM 10664 / DCB-2) protein is Elongation factor Ts.